We begin with the raw amino-acid sequence, 160 residues long: Protein cornichon homolog 3 (160 aa).

Residues 1–10 are Cytoplasmic-facing; sequence MAFTFAAFCY. The chain crosses the membrane as a helical span at residues 11-31; the sequence is MLSLVLCAALIFFAIWHIIAF. At 32–72 the chain is on the lumenal side; it reads DELRTDFKSPIDQCNPVHARERLRNIERICFLLRKLVLPEY. Residues 73–93 traverse the membrane as a helical segment; that stretch reads SIHSLFCIMFLCAQEWLTLGL. Over 94 to 138 the chain is Cytoplasmic; the sequence is NVPLLFYHFWRYFHCPADSSELAYDPPVVMNADTLSYCQKEAWCK. Residues 139-159 form a helical membrane-spanning segment; sequence LAFYLLSFFYYLYCMIYTLVS. Residue serine 160 is a topological domain, lumenal.

This sequence belongs to the cornichon family. As to quaternary structure, acts as an auxiliary subunit for AMPA-selective glutamate receptors (AMPARs). Found in a complex with GRIA1, GRIA2, GRIA3, GRIA4, CNIH2, CACNG2, CACNG3, CACNG4, CACNG5, CACNG7 and CACNG8. As to expression, expression is up-regulated in dorsolateral prefrontal cortex of patients with schizophrenia (postmortem brain study).

Its subcellular location is the postsynaptic cell membrane. Its function is as follows. Regulates the trafficking and gating properties of AMPA-selective glutamate receptors (AMPARs). Promotes their targeting to the cell membrane and synapses and modulates their gating properties by regulating their rates of activation, deactivation and desensitization. This chain is Protein cornichon homolog 3 (CNIH3), found in Homo sapiens (Human).